A 412-amino-acid polypeptide reads, in one-letter code: Vacuolar calcium ion transporter (412 aa).

At 1 to 55 (MIERLKIAKNRLEAMNSFNFPAQDRHERAPLLGSEYDHSMARQLSLLNVVGMTKS) the chain is on the cytoplasmic side. Residues 56–76 (VLMSSYFNLMLVFVPIGLIAG) form a helical membrane-spanning segment. The Lumenal segment spans residues 77-83 (WFEWNAK). Residues 84 to 104 (SVFILNMLAIIPLASLLSFAT) form a helical membrane-spanning segment. Topologically, residues 105–114 (EQLSIISGPT) are cytoplasmic. Residues 115 to 135 (LGALLNASFGNAIELIVGVLA) traverse the membrane as a helical segment. Residues 136–148 (LKRGELRIVQSSL) are Lumenal-facing. The helical transmembrane segment at 149 to 169 (LGSILSNLLLVFGMCLVTTGI) threads the bilayer. The Cytoplasmic segment spans residues 170 to 177 (RREITTFN). A helical membrane pass occupies residues 178–198 (ITVAQTMIAMLALSTATILIP). Residues 199–215 (ATFHYSLPDNANSENAL) are Lumenal-facing. Residues 216-236 (LHVSRGTAVIVLIVYVLLLVF) traverse the membrane as a helical segment. Over 237-264 (QLKTHKHVCHDPSEVEEETEPRILGLRS) the chain is Cytoplasmic. A helical membrane pass occupies residues 265–285 (SIAMLAIVTVFVSLCADYLVG). Residues 286–299 (SIDQLVEEVNISKT) lie on the Lumenal side of the membrane. Residues 300-320 (FVGLVILPVVGNAAEHVTAIV) form a helical membrane-spanning segment. At 321–334 (VSYRGQMDLALGVA) the chain is on the cytoplasmic side. Residues 335 to 355 (IGSSIQIALFLAPFLVIVGWI) traverse the membrane as a helical segment. Residues 356 to 358 (ISQ) are Lumenal-facing. A helical transmembrane segment spans residues 359 to 379 (PLTLYFESLETVILFVSVFLV). Residues 380 to 389 (NYLIQDGATH) lie on the Cytoplasmic side of the membrane. The chain crosses the membrane as a helical span at residues 390-410 (WLEGVQLLALYAIVVLAFFYY). Residues 411–412 (PQ) lie on the Lumenal side of the membrane.

Belongs to the Ca(2+):cation antiporter (CaCA) (TC 2.A.19) family.

It is found in the vacuole membrane. The protein resides in the endoplasmic reticulum membrane. In terms of biological role, has a role in promoting intracellular calcium ion sequestration via the exchange of calcium ions for hydrogen ions across the vacuolar membrane. Involved also in manganese ion homeostasis via its uptake into the vacuole. This is Vacuolar calcium ion transporter (vcx1) from Schizosaccharomyces pombe (strain 972 / ATCC 24843) (Fission yeast).